Consider the following 391-residue polypeptide: Formate-dependent phosphoribosylglycinamide formyltransferase (391 aa).

N(1)-(5-phospho-beta-D-ribosyl)glycinamide-binding positions include 18–19 (EL) and E78. Residues R110, K151, 156-161 (SSGKGQ), 191-194 (EEFI), and E199 each bind ATP. Positions 115-305 (ELAHEELGIR…EFELHLRAIL (191 aa)) constitute an ATP-grasp domain. Mg(2+) contacts are provided by E264 and E276. Residues D283, K353, and 360–361 (RR) contribute to the N(1)-(5-phospho-beta-D-ribosyl)glycinamide site.

This sequence belongs to the PurK/PurT family. As to quaternary structure, homodimer.

It catalyses the reaction N(1)-(5-phospho-beta-D-ribosyl)glycinamide + formate + ATP = N(2)-formyl-N(1)-(5-phospho-beta-D-ribosyl)glycinamide + ADP + phosphate + H(+). Its pathway is purine metabolism; IMP biosynthesis via de novo pathway; N(2)-formyl-N(1)-(5-phospho-D-ribosyl)glycinamide from N(1)-(5-phospho-D-ribosyl)glycinamide (formate route): step 1/1. Involved in the de novo purine biosynthesis. Catalyzes the transfer of formate to 5-phospho-ribosyl-glycinamide (GAR), producing 5-phospho-ribosyl-N-formylglycinamide (FGAR). Formate is provided by PurU via hydrolysis of 10-formyl-tetrahydrofolate. The chain is Formate-dependent phosphoribosylglycinamide formyltransferase from Nostoc sp. (strain PCC 7120 / SAG 25.82 / UTEX 2576).